The chain runs to 483 residues: Transmembrane protein 39B (483 aa).

N-linked (GlcNAc...) asparagine glycosylation is present at Asn9. 7 consecutive transmembrane segments (helical) span residues His76–Ile96, Thr114–Ala134, Leu158–Phe182, Phe187–Gly207, Glu281–Val301, Val414–Leu434, and His440–Leu460.

Belongs to the TMEM39 family.

Its subcellular location is the endoplasmic reticulum membrane. Functionally, may protect the cells against DNA damage caused by exposure to the cold-warming stress and facilitates tissue damage repair during the recovery phase. The polypeptide is Transmembrane protein 39B (Xenopus tropicalis (Western clawed frog)).